We begin with the raw amino-acid sequence, 427 residues long: Trigger factor (427 aa).

One can recognise a PPIase FKBP-type domain in the interval 163-248 (GDTVVIDFVG…IHEVKAKEVP (86 aa)).

The protein belongs to the FKBP-type PPIase family. Tig subfamily.

It localises to the cytoplasm. It catalyses the reaction [protein]-peptidylproline (omega=180) = [protein]-peptidylproline (omega=0). In terms of biological role, involved in protein export. Acts as a chaperone by maintaining the newly synthesized protein in an open conformation. Functions as a peptidyl-prolyl cis-trans isomerase. This is Trigger factor from Streptococcus pneumoniae (strain JJA).